Consider the following 371-residue polypeptide: Bifunctional enzyme IspD/IspF (371 aa).

The interval 1-210 (MSEISLIMLA…LDLPTPSFEI (210 aa)) is 2-C-methyl-D-erythritol 4-phosphate cytidylyltransferase. Residues 211-371 (FTGNGFDVHE…NLKYFDWTRL (161 aa)) are 2-C-methyl-D-erythritol 2,4-cyclodiphosphate synthase. 2 residues coordinate a divalent metal cation: Asp217 and His219. 4-CDP-2-C-methyl-D-erythritol 2-phosphate is bound by residues 217–219 (DVH) and 243–244 (HS). His251 lines the a divalent metal cation pocket. 4-CDP-2-C-methyl-D-erythritol 2-phosphate-binding positions include 265-267 (DIG), 270-274 (YPDTD), 341-344 (TTTE), Phe348, and Arg351.

It in the N-terminal section; belongs to the IspD/TarI cytidylyltransferase family. IspD subfamily. The protein in the C-terminal section; belongs to the IspF family. It depends on a divalent metal cation as a cofactor.

The enzyme catalyses 2-C-methyl-D-erythritol 4-phosphate + CTP + H(+) = 4-CDP-2-C-methyl-D-erythritol + diphosphate. It catalyses the reaction 4-CDP-2-C-methyl-D-erythritol 2-phosphate = 2-C-methyl-D-erythritol 2,4-cyclic diphosphate + CMP. It participates in isoprenoid biosynthesis; isopentenyl diphosphate biosynthesis via DXP pathway; isopentenyl diphosphate from 1-deoxy-D-xylulose 5-phosphate: step 2/6. It functions in the pathway isoprenoid biosynthesis; isopentenyl diphosphate biosynthesis via DXP pathway; isopentenyl diphosphate from 1-deoxy-D-xylulose 5-phosphate: step 4/6. Its function is as follows. Bifunctional enzyme that catalyzes the formation of 4-diphosphocytidyl-2-C-methyl-D-erythritol from CTP and 2-C-methyl-D-erythritol 4-phosphate (MEP) (IspD), and catalyzes the conversion of 4-diphosphocytidyl-2-C-methyl-D-erythritol 2-phosphate (CDP-ME2P) to 2-C-methyl-D-erythritol 2,4-cyclodiphosphate (ME-CPP) with a corresponding release of cytidine 5-monophosphate (CMP) (IspF). The chain is Bifunctional enzyme IspD/IspF from Campylobacter jejuni subsp. jejuni serotype O:23/36 (strain 81-176).